Reading from the N-terminus, the 392-residue chain is Formate-dependent phosphoribosylglycinamide formyltransferase (392 aa).

N(1)-(5-phospho-beta-D-ribosyl)glycinamide-binding positions include 22–23 and Glu-82; that span reads EL. Residues Arg-114, Lys-155, 160–165, 195–198, and Glu-203 contribute to the ATP site; these read SSGHGQ and EGFI. The 189-residue stretch at 119 to 307 folds into the ATP-grasp domain; that stretch reads RLAAEELGLK…QFALHARAIL (189 aa). Residues Glu-266 and Glu-278 each contribute to the Mg(2+) site. Residues Asp-285, Lys-355, and 362-363 contribute to the N(1)-(5-phospho-beta-D-ribosyl)glycinamide site; that span reads RR.

It belongs to the PurK/PurT family. As to quaternary structure, homodimer.

The protein localises to the cell inner membrane. It catalyses the reaction N(1)-(5-phospho-beta-D-ribosyl)glycinamide + formate + ATP = N(2)-formyl-N(1)-(5-phospho-beta-D-ribosyl)glycinamide + ADP + phosphate + H(+). It participates in purine metabolism; IMP biosynthesis via de novo pathway; N(2)-formyl-N(1)-(5-phospho-D-ribosyl)glycinamide from N(1)-(5-phospho-D-ribosyl)glycinamide (formate route): step 1/1. Functionally, involved in the de novo purine biosynthesis. Catalyzes the transfer of formate to 5-phospho-ribosyl-glycinamide (GAR), producing 5-phospho-ribosyl-N-formylglycinamide (FGAR). Formate is provided by PurU via hydrolysis of 10-formyl-tetrahydrofolate. This is Formate-dependent phosphoribosylglycinamide formyltransferase from Mannheimia haemolytica (Pasteurella haemolytica).